The primary structure comprises 440 residues: Aclacinomycin-T 2-deoxy-L-fucose transferase (440 aa).

The enzyme catalyses dTDP-2-deoxy-beta-L-fucose + aclacinomycin T = aclacinomycin S + dTDP + H(+). Functionally, involved in the biosynthesis of the trisaccharide moiety characteristic of the antitumor drug aclacinomycins. In the first reaction, AknK catalyzes the transfer of 2-deoxy-beta-L-fucose from the activated donor dTDP-2-deoxy-beta-L-fucose to the mono-glycosylated aclacinomycin T (rhodosaminyl aklavinone), forming the di-glycosylated aclacinomycin S (L-2-deoxyfucosyl-L-rhodosaminyl aklavinone). It can also catalyze the addition of an alternate dTDP-L-sugar, dTDP-L-daunosamine, to aclacinomycin T and the addition of 2-deoxy-beta-L-fucose to the mono-glycosylated aglycones (monoglycosylated anthracyclines) such as daunomycin (daunorubicin), adriamycin (doxorubicin) and idarubicin. In vitro, AknK also catalyzes the addition of a second L-2-deoxyfucosyl moiety from dTDP-2-deoxy-beta-L-fucose, albeit with reduced activity, to the natural disaccharide chain of aclacinomycin S to produce L-deoxyfucosyl-L-deoxyfucosyl-L-rhodosaminyl aklavinone (2-deoxy-alpha-D-fucosyl-aclacinomycin S), a variant of the natural aclacinomycin A. This Streptomyces galilaeus protein is Aclacinomycin-T 2-deoxy-L-fucose transferase.